Reading from the N-terminus, the 199-residue chain is Recombination protein RecR (199 aa).

The C4-type zinc-finger motif lies at 57–72 (CQSCRTYTEETLCPIC). One can recognise a Toprim domain in the interval 81-176 (STICVVETPA…MISRIAHGVP (96 aa)).

This sequence belongs to the RecR family.

Functionally, may play a role in DNA repair. It seems to be involved in an RecBC-independent recombinational process of DNA repair. It may act with RecF and RecO. The polypeptide is Recombination protein RecR (Shewanella putrefaciens (strain CN-32 / ATCC BAA-453)).